The following is a 155-amino-acid chain: Large ribosomal subunit protein uL30 (155 aa).

Belongs to the universal ribosomal protein uL30 family. As to quaternary structure, part of the 50S ribosomal subunit.

The chain is Large ribosomal subunit protein uL30 from Pyrococcus furiosus (strain ATCC 43587 / DSM 3638 / JCM 8422 / Vc1).